The primary structure comprises 299 residues: Probable plastid-lipid-associated protein 13, chloroplastic (299 aa).

The N-terminal 48 residues, methionine 1 to arginine 48, are a transit peptide targeting the chloroplast. Alanine 2 is subject to N-acetylvaline.

The protein belongs to the PAP/fibrillin family.

It localises to the plastid. The protein localises to the chloroplast. It is found in the plastoglobule. This is Probable plastid-lipid-associated protein 13, chloroplastic (PAP13) from Arabidopsis thaliana (Mouse-ear cress).